A 663-amino-acid chain; its full sequence is DNA ligase (663 aa).

NAD(+) contacts are provided by residues aspartate 31–aspartate 35, serine 80–leucine 81, and glutamate 110. The N6-AMP-lysine intermediate role is filled by lysine 112. Positions 133, 170, 285, and 309 each coordinate NAD(+). Residues cysteine 404, cysteine 407, cysteine 422, and cysteine 428 each coordinate Zn(2+). Residues phenylalanine 585 to glutamate 663 enclose the BRCT domain.

Belongs to the NAD-dependent DNA ligase family. LigA subfamily. The cofactor is Mg(2+). Mn(2+) serves as cofactor.

The catalysed reaction is NAD(+) + (deoxyribonucleotide)n-3'-hydroxyl + 5'-phospho-(deoxyribonucleotide)m = (deoxyribonucleotide)n+m + AMP + beta-nicotinamide D-nucleotide.. In terms of biological role, DNA ligase that catalyzes the formation of phosphodiester linkages between 5'-phosphoryl and 3'-hydroxyl groups in double-stranded DNA using NAD as a coenzyme and as the energy source for the reaction. It is essential for DNA replication and repair of damaged DNA. This chain is DNA ligase, found in Azobacteroides pseudotrichonymphae genomovar. CFP2.